A 206-amino-acid chain; its full sequence is Large ribosomal subunit protein uL4 (206 aa).

This sequence belongs to the universal ribosomal protein uL4 family. As to quaternary structure, part of the 50S ribosomal subunit.

One of the primary rRNA binding proteins, this protein initially binds near the 5'-end of the 23S rRNA. It is important during the early stages of 50S assembly. It makes multiple contacts with different domains of the 23S rRNA in the assembled 50S subunit and ribosome. Its function is as follows. Forms part of the polypeptide exit tunnel. The chain is Large ribosomal subunit protein uL4 from Bradyrhizobium diazoefficiens (strain JCM 10833 / BCRC 13528 / IAM 13628 / NBRC 14792 / USDA 110).